The primary structure comprises 364 residues: Protein FAM81A (364 aa).

3 coiled-coil regions span residues 75-107 (FLEE…RDNI), 158-189 (NKEQ…VDLS), and 261-287 (ANER…QKRN). Residues 281–300 (EESQKRNAEGQRKPDEEKVH) form a disordered region.

The protein belongs to the FAM81 family. Interacts with DLG4/PSD-95, GRIN2B/GLUN2B and SYNGAP1; the interactions facilitate condensate formation. As to expression, expressed in most regions of the brain (at protein level).

It is found in the postsynaptic density. The protein resides in the cytoplasm. Its function is as follows. Facilitates the interaction and assembly of proteins within the postsynaptic density by promoting the condensation of postsynaptic proteins via liquid-liquid phase separation. Required for neuronal activity. Accumulation at the postsynaptic density results in enlargement of dendritic spines. This is Protein FAM81A (Fam81a) from Mus musculus (Mouse).